A 335-amino-acid polypeptide reads, in one-letter code: Glutamyl-tRNA reductase (335 aa).

Residues 60 to 63 (TCHR), Ser110, 115 to 117 (ETE), and Gln121 contribute to the substrate site. The active-site Nucleophile is the Cys61. 189–194 (GYSEIN) is an NADP(+) binding site.

This sequence belongs to the glutamyl-tRNA reductase family. Homodimer.

It catalyses the reaction (S)-4-amino-5-oxopentanoate + tRNA(Glu) + NADP(+) = L-glutamyl-tRNA(Glu) + NADPH + H(+). It participates in porphyrin-containing compound metabolism; protoporphyrin-IX biosynthesis; 5-aminolevulinate from L-glutamyl-tRNA(Glu): step 1/2. Functionally, catalyzes the NADPH-dependent reduction of glutamyl-tRNA(Glu) to glutamate 1-semialdehyde (GSA). The polypeptide is Glutamyl-tRNA reductase (Chlamydia trachomatis serovar D (strain ATCC VR-885 / DSM 19411 / UW-3/Cx)).